A 364-amino-acid polypeptide reads, in one-letter code: Carbamoyl phosphate synthase small chain (364 aa).

CPSase regions lie at residues 1–167 (MKRQ…PSPG) and 1–171 (MKRQ…RGER). L-glutamine-binding residues include serine 45, glycine 219, and glycine 221. Residues 171–358 (RIVLIDFGMK…LALIREFNKK (188 aa)) form the Glutamine amidotransferase type-1 domain. Cysteine 246 functions as the Nucleophile in the catalytic mechanism. L-glutamine contacts are provided by leucine 247, glutamine 250, asparagine 288, glycine 290, and tyrosine 291. Active-site residues include histidine 331 and glutamate 333.

Belongs to the CarA family. Composed of two chains; the small (or glutamine) chain promotes the hydrolysis of glutamine to ammonia, which is used by the large (or ammonia) chain to synthesize carbamoyl phosphate. Tetramer of heterodimers (alpha,beta)4.

The enzyme catalyses hydrogencarbonate + L-glutamine + 2 ATP + H2O = carbamoyl phosphate + L-glutamate + 2 ADP + phosphate + 2 H(+). It carries out the reaction L-glutamine + H2O = L-glutamate + NH4(+). Its pathway is amino-acid biosynthesis; L-arginine biosynthesis; carbamoyl phosphate from bicarbonate: step 1/1. It participates in pyrimidine metabolism; UMP biosynthesis via de novo pathway; (S)-dihydroorotate from bicarbonate: step 1/3. Functionally, small subunit of the glutamine-dependent carbamoyl phosphate synthetase (CPSase). CPSase catalyzes the formation of carbamoyl phosphate from the ammonia moiety of glutamine, carbonate, and phosphate donated by ATP, constituting the first step of 2 biosynthetic pathways, one leading to arginine and/or urea and the other to pyrimidine nucleotides. The small subunit (glutamine amidotransferase) binds and cleaves glutamine to supply the large subunit with the substrate ammonia. The polypeptide is Carbamoyl phosphate synthase small chain (Bacillus caldolyticus).